The chain runs to 133 residues: Ribosome-binding factor A (133 aa).

Belongs to the RbfA family. As to quaternary structure, monomer. Binds 30S ribosomal subunits, but not 50S ribosomal subunits or 70S ribosomes.

The protein localises to the cytoplasm. In terms of biological role, one of several proteins that assist in the late maturation steps of the functional core of the 30S ribosomal subunit. Associates with free 30S ribosomal subunits (but not with 30S subunits that are part of 70S ribosomes or polysomes). Required for efficient processing of 16S rRNA. May interact with the 5'-terminal helix region of 16S rRNA. The chain is Ribosome-binding factor A from Salmonella typhimurium (strain LT2 / SGSC1412 / ATCC 700720).